A 517-amino-acid chain; its full sequence is Phospholipase C C (517 aa).

Positions 1–39 form a signal peptide, tat-type signal; that stretch reads MVSQGAFAGMSRRAFLAKAAGAGAAAVLTDWAAPVIEKA.

The protein belongs to the bacterial phospholipase C family. Post-translationally, predicted to be exported by the Tat system. The position of the signal peptide cleavage has not been experimentally proven.

It localises to the secreted. It is found in the cell wall. It carries out the reaction a 1,2-diacyl-sn-glycero-3-phosphocholine + H2O = phosphocholine + a 1,2-diacyl-sn-glycerol + H(+). The catalysed reaction is 1,2-dihexadecanoyl-sn-glycero-3-phosphocholine + H2O = 1,2-dihexadecanoyl-sn-glycerol + phosphocholine + H(+). Functionally, involved in virulence. Induces cytotoxic effects on mouse macrophage cell lines, via direct or indirect enzymatic hydrolysis of cell membrane phospholipids. Hydrolyzes phosphatidylcholine. Does not have hemolytic activity. This chain is Phospholipase C C, found in Mycobacterium tuberculosis (strain ATCC 25618 / H37Rv).